The sequence spans 298 residues: Lipoyl synthase (298 aa).

The [4Fe-4S] cluster site is built by C40, C45, C51, C67, C71, C74, and S280. The 217-residue stretch at 53–269 (AVRRTATFMI…KEIALSKGFS (217 aa)) folds into the Radical SAM core domain.

Belongs to the radical SAM superfamily. Lipoyl synthase family. It depends on [4Fe-4S] cluster as a cofactor.

The protein localises to the cytoplasm. It carries out the reaction [[Fe-S] cluster scaffold protein carrying a second [4Fe-4S](2+) cluster] + N(6)-octanoyl-L-lysyl-[protein] + 2 oxidized [2Fe-2S]-[ferredoxin] + 2 S-adenosyl-L-methionine + 4 H(+) = [[Fe-S] cluster scaffold protein] + N(6)-[(R)-dihydrolipoyl]-L-lysyl-[protein] + 4 Fe(3+) + 2 hydrogen sulfide + 2 5'-deoxyadenosine + 2 L-methionine + 2 reduced [2Fe-2S]-[ferredoxin]. Its pathway is protein modification; protein lipoylation via endogenous pathway; protein N(6)-(lipoyl)lysine from octanoyl-[acyl-carrier-protein]. In terms of biological role, catalyzes the radical-mediated insertion of two sulfur atoms into the C-6 and C-8 positions of the octanoyl moiety bound to the lipoyl domains of lipoate-dependent enzymes, thereby converting the octanoylated domains into lipoylated derivatives. The sequence is that of Lipoyl synthase from Geobacillus kaustophilus (strain HTA426).